Reading from the N-terminus, the 171-residue chain is Deoxyuridine 5'-triphosphate nucleotidohydrolase (171 aa).

E143 serves as a coordination point for Mg(2+).

The protein belongs to the dUTPase family. As to quaternary structure, homotrimer. It depends on Mg(2+) as a cofactor.

It carries out the reaction dUTP + H2O = dUMP + diphosphate + H(+). Its pathway is pyrimidine metabolism; dUMP biosynthesis; dUMP from dCTP (dUTP route): step 2/2. This enzyme is involved in nucleotide metabolism: it produces dUMP, the immediate precursor of thymidine nucleotides and it decreases the intracellular concentration of dUTP, preventing uracil incorporation into DNA. The polypeptide is Deoxyuridine 5'-triphosphate nucleotidohydrolase (DUT) (Oryza sativa subsp. japonica (Rice)).